Consider the following 65-residue polypeptide: Large ribosomal subunit protein bL33m (65 aa).

A mitochondrion-targeting transit peptide spans 1–8; sequence MFLTTANL.

Belongs to the bacterial ribosomal protein bL33 family. Component of the mitochondrial ribosome large subunit (39S) which comprises a 16S rRNA and about 50 distinct proteins.

Its subcellular location is the mitochondrion. In Tetraodon nigroviridis (Spotted green pufferfish), this protein is Large ribosomal subunit protein bL33m (mrpl33).